Consider the following 289-residue polypeptide: Cell division protein ZipA (289 aa).

A topological domain (periplasmic) is located at residue M1. A helical membrane pass occupies residues 2 to 22; that stretch reads EIGLREWLIVIGIIVIAGILF. Topologically, residues 23-289 are cytoplasmic; the sequence is DGWRRMRGSK…ERRALTQRRG (267 aa). The interval 48-141 is disordered; the sequence is DEEETTSAEV…KPAQRITEDK (94 aa). 3 stretches are compositionally biased toward basic and acidic residues: residues 64–77, 85–106, and 123–141; these read LDTH…EHDL, REGK…KDEP, and GRDD…TEDK.

Belongs to the ZipA family. As to quaternary structure, interacts with FtsZ via their C-terminal domains.

It localises to the cell inner membrane. In terms of biological role, essential cell division protein that stabilizes the FtsZ protofilaments by cross-linking them and that serves as a cytoplasmic membrane anchor for the Z ring. Also required for the recruitment to the septal ring of downstream cell division proteins. The chain is Cell division protein ZipA from Pseudomonas savastanoi pv. phaseolicola (strain 1448A / Race 6) (Pseudomonas syringae pv. phaseolicola (strain 1448A / Race 6)).